We begin with the raw amino-acid sequence, 491 residues long: Ketol-acid reductoisomerase (NADP(+)) (491 aa).

The KARI N-terminal Rossmann domain maps to 14 to 208; the sequence is LDQLGRCRFM…GGHRAGVLES (195 aa). Residues 45–48, Arg68, Arg76, Ser78, and 108–110 contribute to the NADP(+) site; these read CGAQ and DKQ. His132 is a catalytic residue. Gly158 lines the NADP(+) pocket. KARI C-terminal knotted domains follow at residues 209–344 and 345–485; these read SFVA…NAPK and YEGK…MTDM. Mg(2+) is bound by residues Asp217, Glu221, Glu389, and Glu393. Ser414 is a substrate binding site.

It belongs to the ketol-acid reductoisomerase family. The cofactor is Mg(2+).

It carries out the reaction (2R)-2,3-dihydroxy-3-methylbutanoate + NADP(+) = (2S)-2-acetolactate + NADPH + H(+). The catalysed reaction is (2R,3R)-2,3-dihydroxy-3-methylpentanoate + NADP(+) = (S)-2-ethyl-2-hydroxy-3-oxobutanoate + NADPH + H(+). Its pathway is amino-acid biosynthesis; L-isoleucine biosynthesis; L-isoleucine from 2-oxobutanoate: step 2/4. It functions in the pathway amino-acid biosynthesis; L-valine biosynthesis; L-valine from pyruvate: step 2/4. Its function is as follows. Involved in the biosynthesis of branched-chain amino acids (BCAA). Catalyzes an alkyl-migration followed by a ketol-acid reduction of (S)-2-acetolactate (S2AL) to yield (R)-2,3-dihydroxy-isovalerate. In the isomerase reaction, S2AL is rearranged via a Mg-dependent methyl migration to produce 3-hydroxy-3-methyl-2-ketobutyrate (HMKB). In the reductase reaction, this 2-ketoacid undergoes a metal-dependent reduction by NADPH to yield (R)-2,3-dihydroxy-isovalerate. The polypeptide is Ketol-acid reductoisomerase (NADP(+)) (Pasteurella multocida (strain Pm70)).